The following is a 139-amino-acid chain: MFEFYIAAREQKETGHPGIFSRQKHSTIIYVICLLLICLWFAGMVLVGGYARQLWVLWIVKAEVTVEAETPAFKQSTQHYFFKKQPLPVVESVEEEDDPGVAVENAPSSSEDEENTVEESEEKAGLRERVKNALNELER.

A helical membrane pass occupies residues I28–G48. Residues V93 to R139 are disordered. Residues S110 to E121 are compositionally biased toward acidic residues. Residues E122–R139 show a composition bias toward basic and acidic residues.

Its subcellular location is the cell membrane. In terms of biological role, part of a cryptic operon that encodes proteins involved in type II secretion pathway in other organisms, but is not expressed in strain K12 under standard laboratory conditions. May play a regulatory role under conditions of derepressed gsp gene expression. This Escherichia coli (strain K12) protein is Putative general secretion pathway protein B.